The primary structure comprises 167 residues: D-aminoacyl-tRNA deacylase 2 (167 aa).

The short motif at 159 to 160 (GP) is the Gly-transPro motif, allows the protein to recognize chirality of D-amino acids element.

Belongs to the DTD family. In terms of assembly, homodimer.

The protein localises to the cytoplasm. It catalyses the reaction a D-aminoacyl-tRNA + H2O = a tRNA + a D-alpha-amino acid + H(+). The enzyme catalyses glycyl-tRNA(Ala) + H2O = tRNA(Ala) + glycine + H(+). It carries out the reaction D-tyrosyl-tRNA(Tyr) + H2O = D-tyrosine + tRNA(Tyr). The catalysed reaction is L-alanyl-tRNA(Thr) + H2O = tRNA(Thr) + L-alanine + H(+). In terms of biological role, deacylates mischarged D-aminoacyl-tRNAs. Also deacylates mischarged glycyl-tRNA(Ala), protecting cells against glycine mischarging by AlaRS. Probably acts by rejecting L-amino acids from its binding site rather than specific recognition of D-amino acids. Catalyzes the hydrolysis of D-tyrosyl-tRNA(Tyr), has no activity on correctly charged L-tyrosyl-tRNA(Tyr). By recycling D-aminoacyl-tRNA to D-amino acids and free tRNA molecules, this enzyme counteracts the toxicity associated with the formation of D-aminoacyl-tRNA entities in vivo and helps enforce protein L-homochirality. In contrast to DTD1, deacylates L-Ala mischarged on tRNA(Thr)(G4.U69) by alanine-tRNA ligase AARS. Can deacylate L-Ala due to a relaxed specificity for substrate chirality caused by the trans conformation of the Gly-Pro motif in the active site. Also hydrolyzes correctly charged, achiral, glycyl-tRNA(Gly) in vitro, although in vivo EEF1A1/EF-Tu may protect cognate achiral glycyl-tRNA(Gly) from DTD2-mediated deacetylation. The chain is D-aminoacyl-tRNA deacylase 2 (DTD2) from Gallus gallus (Chicken).